Consider the following 176-residue polypeptide: MSFFKRKSKSPSPSAQPSNIDTYVPPPPIPIELDGYSQTTKNRLMSTELAEDIRNILPMRYQVRTNWHLVYSLEQHGASLHTLYRMMKPLTRYDKNGYILVIRDLKNSQFGCFVNEYLHPTDLRRFYGNGECFLWKSKRQGDDVAEEMGGEANHIQFKAFPYTGLNDFIIYCTSEF.

Residues 1-26 form a disordered region; it reads MSFFKRKSKSPSPSAQPSNIDTYVPP. Residues 43-176 enclose the TLDc domain; the sequence is RLMSTELAED…DFIIYCTSEF (134 aa).

This sequence belongs to the OXR1 family.

The protein localises to the mitochondrion. Its function is as follows. May be involved in protection from oxidative damage. The sequence is that of Oxidation resistance protein 1 (OXR1) from Cyberlindnera jadinii (Torula yeast).